The primary structure comprises 401 residues: Tryptophan synthase beta chain (401 aa).

K91 is subject to N6-(pyridoxal phosphate)lysine.

It belongs to the TrpB family. As to quaternary structure, tetramer of two alpha and two beta chains. It depends on pyridoxal 5'-phosphate as a cofactor.

The enzyme catalyses (1S,2R)-1-C-(indol-3-yl)glycerol 3-phosphate + L-serine = D-glyceraldehyde 3-phosphate + L-tryptophan + H2O. It participates in amino-acid biosynthesis; L-tryptophan biosynthesis; L-tryptophan from chorismate: step 5/5. Functionally, the beta subunit is responsible for the synthesis of L-tryptophan from indole and L-serine. The protein is Tryptophan synthase beta chain of Lactococcus lactis subsp. cremoris (strain SK11).